Consider the following 429-residue polypeptide: Phosphoribosylamine--glycine ligase (429 aa).

Residues 109 to 316 enclose the ATP-grasp domain; sequence KDFLARHQIP…LVDLCLAAID (208 aa). 135-196 provides a ligand contact to ATP; that stretch reads VREQGAPIVV…EEFLDGEEAS (62 aa). The segment at 212-235 is disordered; sequence SQDHKRVGDKDTGPNTGGMGAYSP. Basic and acidic residues predominate over residues 213-223; it reads QDHKRVGDKDT. Mg(2+) contacts are provided by glutamate 286 and asparagine 288.

It belongs to the GARS family. Requires Mg(2+) as cofactor. Mn(2+) is required as a cofactor.

It carries out the reaction 5-phospho-beta-D-ribosylamine + glycine + ATP = N(1)-(5-phospho-beta-D-ribosyl)glycinamide + ADP + phosphate + H(+). It participates in purine metabolism; IMP biosynthesis via de novo pathway; N(1)-(5-phospho-D-ribosyl)glycinamide from 5-phospho-alpha-D-ribose 1-diphosphate: step 2/2. This Vibrio parahaemolyticus serotype O3:K6 (strain RIMD 2210633) protein is Phosphoribosylamine--glycine ligase.